The sequence spans 55 residues: Neurotoxin B-IV (55 aa).

Position 10 is a hydroxyproline (Pro10). 4 cysteine pairs are disulfide-bonded: Cys12–Cys52, Cys16–Cys48, Cys23–Cys41, and Cys26–Cys37.

It belongs to the worm B-toxin family.

It is found in the secreted. This toxin increases the excitability of nerves by delaying the inactivation of the voltage-gated sodium channel (Nav). Only acts on some crustacean. Is more abundant, but 15-fold less toxic than neurotoxin B-II. This is Neurotoxin B-IV from Cerebratulus lacteus (Milky ribbon worm).